The sequence spans 41 residues: Cuticle protein 32 (41 aa).

4 repeat units span residues 17–20 (AAPA), 25–28 (AAPA), 31–34 (AAPA), and 38–41 (AAPA).

Component of the cuticle of migratory locust which contains more than 100 different structural proteins. This Locusta migratoria (Migratory locust) protein is Cuticle protein 32.